The following is a 141-amino-acid chain: Large ribosomal subunit protein bL17 (141 aa).

Belongs to the bacterial ribosomal protein bL17 family. As to quaternary structure, part of the 50S ribosomal subunit. Contacts protein L32.

In Sinorhizobium fredii (strain NBRC 101917 / NGR234), this protein is Large ribosomal subunit protein bL17.